The following is a 490-amino-acid chain: Betaine aldehyde dehydrogenase (490 aa).

K(+) contacts are provided by isoleucine 27 and aspartate 93. Residue 150 to 152 coordinates NAD(+); it reads GAW. The Charge relay system role is filled by lysine 162. 176-179 lines the NAD(+) pocket; sequence KPSE. A K(+)-binding site is contributed by valine 180. 230-233 contributes to the NAD(+) binding site; it reads GTTT. Leucine 246 is a K(+) binding site. The Proton acceptor role is filled by glutamate 252. NAD(+) contacts are provided by glycine 254, cysteine 286, and glutamate 387. Catalysis depends on cysteine 286, which acts as the Nucleophile. Position 286 is a cysteine sulfenic acid (-SOH) (cysteine 286). Residues lysine 457 and glycine 460 each contribute to the K(+) site. The active-site Charge relay system is the glutamate 464.

Belongs to the aldehyde dehydrogenase family. Dimer of dimers. K(+) serves as cofactor.

The enzyme catalyses betaine aldehyde + NAD(+) + H2O = glycine betaine + NADH + 2 H(+). It functions in the pathway amine and polyamine biosynthesis; betaine biosynthesis via choline pathway; betaine from betaine aldehyde: step 1/1. Its function is as follows. Involved in the biosynthesis of the osmoprotectant glycine betaine. Catalyzes the irreversible oxidation of betaine aldehyde to the corresponding acid. The chain is Betaine aldehyde dehydrogenase from Pseudomonas entomophila (strain L48).